Reading from the N-terminus, the 511-residue chain is Bifunctional purine biosynthesis protein PurH (511 aa).

Positions 1–146 (MARLALLSVS…KNFAHTTVLT (146 aa)) constitute an MGS-like domain.

Belongs to the PurH family.

The enzyme catalyses (6R)-10-formyltetrahydrofolate + 5-amino-1-(5-phospho-beta-D-ribosyl)imidazole-4-carboxamide = 5-formamido-1-(5-phospho-D-ribosyl)imidazole-4-carboxamide + (6S)-5,6,7,8-tetrahydrofolate. The catalysed reaction is IMP + H2O = 5-formamido-1-(5-phospho-D-ribosyl)imidazole-4-carboxamide. Its pathway is purine metabolism; IMP biosynthesis via de novo pathway; 5-formamido-1-(5-phospho-D-ribosyl)imidazole-4-carboxamide from 5-amino-1-(5-phospho-D-ribosyl)imidazole-4-carboxamide (10-formyl THF route): step 1/1. It participates in purine metabolism; IMP biosynthesis via de novo pathway; IMP from 5-formamido-1-(5-phospho-D-ribosyl)imidazole-4-carboxamide: step 1/1. The chain is Bifunctional purine biosynthesis protein PurH from Synechocystis sp. (strain ATCC 27184 / PCC 6803 / Kazusa).